We begin with the raw amino-acid sequence, 514 residues long: Cytochrome c-552 (514 aa).

The signal sequence occupies residues 1 to 21; sequence MKFKLLLAGSLVAVGAMALLA. Residues His-101, Cys-129, Cys-132, Lys-133, Cys-167, Cys-170, His-171, Cys-210, Cys-213, and His-214 each contribute to the heme c site. Positions 216, 217, 279, and 281 each coordinate Ca(2+). Tyr-217 contacts substrate. Position 282 (His-282) interacts with substrate. Residues His-293, Cys-300, Cys-303, His-304, His-318, Cys-332, Cys-335, His-336, and His-411 each contribute to the heme c site.

Belongs to the cytochrome c-552 family. As to quaternary structure, homodimer. Probably also exists as a membrane-associated heterooligomeric complex. The cofactor is Ca(2+). Requires heme c as cofactor.

The protein localises to the periplasm. It carries out the reaction 6 Fe(III)-[cytochrome c] + NH4(+) + 2 H2O = 6 Fe(II)-[cytochrome c] + nitrite + 8 H(+). It participates in nitrogen metabolism; nitrate reduction (assimilation). In terms of biological role, catalyzes the reduction of nitrite to ammonia, consuming six electrons in the process. Has very low activity toward hydroxylamine, and even lower activity toward sulfite. Sulfite reductase activity is maximal at neutral pH. This is Cytochrome c-552 (nrfA) from Sulfurospirillum deleyianum.